Here is an 888-residue protein sequence, read N- to C-terminus: Patched domain-containing protein 1 (888 aa).

A helical membrane pass occupies residues 20-40 (FIASHPVFFASAPVLISILLG). N-linked (GlcNAc...) asparagine glycans are attached at residues asparagine 77, asparagine 133, and asparagine 167. Residues 268-427 (SERYLVTSLI…LSFYGSSLVF (160 aa)) enclose the SSD domain. The next 2 helical transmembrane spans lie at 273 to 293 (VTSLILVVTMAILCCSMQDCV) and 298 to 318 (WLGLLGLVTISLATLTAAGII). Asparagine 319 and asparagine 326 each carry an N-linked (GlcNAc...) asparagine glycan. A run of 4 helical transmembrane segments spans residues 328–348 (TFLGVPFVMLGHGLYGTFEML), 373–393 (LSFSLTTAMYLVTFGIGASPF), 407–427 (CIAIFFNYLYVLSFYGSSLVF), and 502–522 (PFVVLFYLIYISFALMGYLQV). Asparagine 568, asparagine 599, and asparagine 608 each carry an N-linked (GlcNAc...) asparagine glycan. 2 consecutive transmembrane segments (helical) span residues 707–727 (ALFLLFFSAFLVADSLINVWI) and 738–758 (VIGFMTLWKVELDCISVLCLI). N-linked (GlcNAc...) asparagine glycosylation occurs at asparagine 762. Residues 795–815 (GVAILQSYLCYIVGLIPLAAV) traverse the membrane as a helical segment. The N-linked (GlcNAc...) asparagine glycan is linked to asparagine 818. The helical transmembrane segment at 826-846 (CLFLIAFVTFFHCFAILPVIL) threads the bilayer.

This sequence belongs to the patched family. Widely expressed, including in various regions of the brain with highest expression in the gray and white cerebellum, followed by the cerebellar vermis and the pituitary gland.

It localises to the cell membrane. The protein resides in the cell projection. The protein localises to the dendritic spine. Its function is as follows. Required for the development and function of the thalamic reticular nucleus (TRN), a part of the thalamus that is critical for thalamocortical transmission, generation of sleep rhythms, sensorimotor processing and attention. Can bind cholesterol in vitro. This Homo sapiens (Human) protein is Patched domain-containing protein 1.